We begin with the raw amino-acid sequence, 63 residues long: Translational regulator CsrA (63 aa).

Belongs to the CsrA/RsmA family. As to quaternary structure, homodimer; the beta-strands of each monomer intercalate to form a hydrophobic core, while the alpha-helices form wings that extend away from the core.

The protein resides in the cytoplasm. Functionally, a key translational regulator that binds mRNA to regulate translation initiation and/or mRNA stability. Mediates global changes in gene expression, shifting from rapid growth to stress survival by linking envelope stress, the stringent response and the catabolite repression systems. Usually binds in the 5'-UTR; binding at or near the Shine-Dalgarno sequence prevents ribosome-binding, repressing translation, binding elsewhere in the 5'-UTR can activate translation and/or stabilize the mRNA. Its function is antagonized by small RNA(s). The protein is Translational regulator CsrA of Haemophilus influenzae (strain PittEE).